Consider the following 145-residue polypeptide: D-aminoacyl-tRNA deacylase (145 aa).

Positions 137–138 (GP) match the Gly-cisPro motif, important for rejection of L-amino acids motif.

This sequence belongs to the DTD family. Homodimer.

It is found in the cytoplasm. It catalyses the reaction glycyl-tRNA(Ala) + H2O = tRNA(Ala) + glycine + H(+). The catalysed reaction is a D-aminoacyl-tRNA + H2O = a tRNA + a D-alpha-amino acid + H(+). An aminoacyl-tRNA editing enzyme that deacylates mischarged D-aminoacyl-tRNAs. Also deacylates mischarged glycyl-tRNA(Ala), protecting cells against glycine mischarging by AlaRS. Acts via tRNA-based rather than protein-based catalysis; rejects L-amino acids rather than detecting D-amino acids in the active site. By recycling D-aminoacyl-tRNA to D-amino acids and free tRNA molecules, this enzyme counteracts the toxicity associated with the formation of D-aminoacyl-tRNA entities in vivo and helps enforce protein L-homochirality. The sequence is that of D-aminoacyl-tRNA deacylase from Pseudomonas putida (strain ATCC 47054 / DSM 6125 / CFBP 8728 / NCIMB 11950 / KT2440).